The primary structure comprises 697 residues: MTRSVYVTGIDRGDGRQVVELGVMELLTRQVDRVGVFRPLVHDGPDRLFELLRARYRLSQDPATVYGMDYQEASLLQAEQGVDELVSALVDRFHLVARDYDVVLVLGTDYADTQFPDELSLNARLANEFGASVLPVVGGRKQTADSVLAETHNAFRAYDGLGCDVLAMVTNRVAREDRDEIAERLAHRLPVPCWVVPDEPALSAPTVSQIAHALGAEIVLGDDSGLARDALDFVFGGAMLPNLLAALTPGCLVITPGDRADLVIGTLAAHSAGTPPIAGVLLTLNEVPGEGILTLAARLAPGTPVLSVTGTSFPTAERLFSLEGKLGAATPRKAETALGLFERYVDTAELNKRVSAPSSDRVTPMMFEHKLLEQARSDLRRVVLPEGTEERVLHAAEVLLRRGVCELTLLGPVEQIRKKAADLGIDLGGAELIDPAASELRDSFAEKYAALRAHKGVTVELAYDVVSDVNYFGTLMVQEGFADGMVSGSVHSTAATIRPAFEIIKTKPDAAIVSSVFFMCLADKVLVYGDCAVNPDPDAEQLADIATQSASTAAQFGVEPRIAMLSYSTGTSGSGADVDKVREATELVRSRRPDLSVEGPIQYDAAVEPSVAATKLPGSAVAGQASVLIFPDLNTGNNTYKAVQRSAGAIAVGPVLQGLRKPVNDLSRGALVQDIVNTVAITAIQAQQSPTEKASAQ.

Residues 366-697 (MFEHKLLEQA…QSPTEKASAQ (332 aa)) form a phosphate acetyltransferase region.

In the N-terminal section; belongs to the CobB/CobQ family. The protein in the C-terminal section; belongs to the phosphate acetyltransferase and butyryltransferase family. In terms of assembly, homohexamer.

The protein localises to the cytoplasm. The catalysed reaction is acetyl-CoA + phosphate = acetyl phosphate + CoA. It functions in the pathway metabolic intermediate biosynthesis; acetyl-CoA biosynthesis; acetyl-CoA from acetate: step 2/2. Functionally, involved in acetate metabolism. In Streptomyces coelicolor (strain ATCC BAA-471 / A3(2) / M145), this protein is Phosphate acetyltransferase (pta).